A 589-amino-acid chain; its full sequence is Aspartate--tRNA(Asp/Asn) ligase (589 aa).

E175 lines the L-aspartate pocket. The interval 199–202 is aspartate; the sequence is QQLK. Residue R221 coordinates L-aspartate. Residues 221–223 and Q230 each bind ATP; that span reads RDE. Position 451 (H451) interacts with L-aspartate. E485 provides a ligand contact to ATP. R492 is an L-aspartate binding site. 537 to 540 contributes to the ATP binding site; it reads GIDR.

The protein belongs to the class-II aminoacyl-tRNA synthetase family. Type 1 subfamily. Homodimer.

It localises to the cytoplasm. The enzyme catalyses tRNA(Asx) + L-aspartate + ATP = L-aspartyl-tRNA(Asx) + AMP + diphosphate. In terms of biological role, aspartyl-tRNA synthetase with relaxed tRNA specificity since it is able to aspartylate not only its cognate tRNA(Asp) but also tRNA(Asn). Reaction proceeds in two steps: L-aspartate is first activated by ATP to form Asp-AMP and then transferred to the acceptor end of tRNA(Asp/Asn). The polypeptide is Aspartate--tRNA(Asp/Asn) ligase (Roseiflexus sp. (strain RS-1)).